The following is a 521-amino-acid chain: GMP synthase [glutamine-hydrolyzing] (521 aa).

A Glutamine amidotransferase type-1 domain is found at 8 to 203; it reads KILILDFGAQ…VVDICGCQTL (196 aa). Residue C85 is the Nucleophile of the active site. Residues H177 and E179 contribute to the active site. Residues 204 to 396 enclose the GMPS ATP-PPase domain; the sequence is WTAANIIDDQ…LGLPRTMVYR (193 aa). Residue 231–237 participates in ATP binding; the sequence is SGGVDSS.

Homodimer.

The enzyme catalyses XMP + L-glutamine + ATP + H2O = GMP + L-glutamate + AMP + diphosphate + 2 H(+). It functions in the pathway purine metabolism; GMP biosynthesis; GMP from XMP (L-Gln route): step 1/1. Its function is as follows. Catalyzes the synthesis of GMP from XMP. The chain is GMP synthase [glutamine-hydrolyzing] from Xanthomonas oryzae pv. oryzae (strain PXO99A).